A 359-amino-acid polypeptide reads, in one-letter code: MARITLRQLLDHAAERSYGVPAFNINNMEQGLAIMEAARASDAPVILQVSRGARSYANDVMLAKMMEALEEMYPDIPLCIHQDHGNNVATCLTAIQHGFTSVMMDGSLKEDAKTPADYDYNVSITAEVSRLAHMVGASVEGELGCLGSLETGHGEAEDGHGFEGALDRSQLLTDPDEAARFVAETGVDALAVAIGTSHGAYKFTRKPTGEVLAMDVIEKIHERLPDTHIVMHGSSSVPQEWQDVFNAHGGQMRETYGVPVEEIVRGIRFGVRKVNIDTDLRLAAAAAFRRVADTSRSEFDPRKFLKPAMDAMSAVCKARFEAFGTAGNASRIKVVPMPEMARRYASGSLKPQSARSEAA.

Ser50 contributes to the D-glyceraldehyde 3-phosphate binding site. Asp83 (proton donor) is an active-site residue. Positions 84, 105, 142, and 198 each coordinate Zn(2+). Gly199 contacts dihydroxyacetone phosphate. His232 is a binding site for Zn(2+). Residues Gly233–Ser235 and Asn275–Thr278 each bind dihydroxyacetone phosphate.

The protein belongs to the class II fructose-bisphosphate aldolase family. As to quaternary structure, homodimer. It depends on Zn(2+) as a cofactor.

It carries out the reaction beta-D-fructose 1,6-bisphosphate = D-glyceraldehyde 3-phosphate + dihydroxyacetone phosphate. It functions in the pathway carbohydrate biosynthesis; Calvin cycle. The protein operates within carbohydrate degradation; glycolysis; D-glyceraldehyde 3-phosphate and glycerone phosphate from D-glucose: step 4/4. In terms of biological role, catalyzes the aldol condensation of dihydroxyacetone phosphate (DHAP or glycerone-phosphate) with glyceraldehyde 3-phosphate (G3P) to form fructose 1,6-bisphosphate (FBP) in gluconeogenesis and the reverse reaction in glycolysis. The polypeptide is Fructose-bisphosphate aldolase (cbbA) (Rhizobium meliloti (strain 1021) (Ensifer meliloti)).